The chain runs to 644 residues: Threonine--tRNA ligase (644 aa).

The TGS domain occupies V8–T70. Residues D251–P541 are catalytic. 3 residues coordinate Zn(2+): C342, H393, and H518.

It belongs to the class-II aminoacyl-tRNA synthetase family. Homodimer. It depends on Zn(2+) as a cofactor.

It is found in the cytoplasm. It carries out the reaction tRNA(Thr) + L-threonine + ATP = L-threonyl-tRNA(Thr) + AMP + diphosphate + H(+). In terms of biological role, catalyzes the attachment of threonine to tRNA(Thr) in a two-step reaction: L-threonine is first activated by ATP to form Thr-AMP and then transferred to the acceptor end of tRNA(Thr). Also edits incorrectly charged L-seryl-tRNA(Thr). The sequence is that of Threonine--tRNA ligase from Caldanaerobacter subterraneus subsp. tengcongensis (strain DSM 15242 / JCM 11007 / NBRC 100824 / MB4) (Thermoanaerobacter tengcongensis).